We begin with the raw amino-acid sequence, 135 residues long: Putative nickel-responsive regulator (135 aa).

Residues His79, His90, His92, and Cys98 each contribute to the Ni(2+) site.

It belongs to the transcriptional regulatory CopG/NikR family. Requires Ni(2+) as cofactor.

Its function is as follows. Transcriptional regulator. This chain is Putative nickel-responsive regulator, found in Dictyoglomus turgidum (strain DSM 6724 / Z-1310).